A 616-amino-acid polypeptide reads, in one-letter code: Sulfite reductase [NADPH] flavoprotein alpha-component (616 aa).

In terms of domain architecture, Flavodoxin-like spans 80–218; the sequence is LTIIFASQTG…SAAQWRKQAL (139 aa). FMN is bound by residues 86–91, 133–136, and 169–178; these read SQTGNA, STNG, and LGDSSYEFFC. Residues 251–465 enclose the FAD-binding FR-type domain; the sequence is QKPYAATLLT…VENNNNFKLP (215 aa). Residues T339, G373, 403-406, 421-423, Y427, and 436-439 contribute to the FAD site; these read RLYS, TVG, and GGAS. NADP(+)-binding positions include 536 to 537, 542 to 546, and D578; these read SR and KVYVQ. Residue Y616 participates in FAD binding.

It belongs to the NADPH-dependent sulphite reductase flavoprotein subunit CysJ family. The protein in the N-terminal section; belongs to the flavodoxin family. In the C-terminal section; belongs to the flavoprotein pyridine nucleotide cytochrome reductase family. In terms of assembly, alpha(8)-beta(8). The alpha component is a flavoprotein, the beta component is a hemoprotein. FAD is required as a cofactor. The cofactor is FMN.

It catalyses the reaction hydrogen sulfide + 3 NADP(+) + 3 H2O = sulfite + 3 NADPH + 4 H(+). The protein operates within sulfur metabolism; hydrogen sulfide biosynthesis; hydrogen sulfide from sulfite (NADPH route): step 1/1. Its function is as follows. Component of the sulfite reductase complex that catalyzes the 6-electron reduction of sulfite to sulfide. This is one of several activities required for the biosynthesis of L-cysteine from sulfate. The flavoprotein component catalyzes the electron flow from NADPH -&gt; FAD -&gt; FMN to the hemoprotein component. The protein is Sulfite reductase [NADPH] flavoprotein alpha-component of Vibrio vulnificus (strain CMCP6).